We begin with the raw amino-acid sequence, 119 residues long: Large ribosomal subunit protein bL20 (119 aa).

The protein belongs to the bacterial ribosomal protein bL20 family.

In terms of biological role, binds directly to 23S ribosomal RNA and is necessary for the in vitro assembly process of the 50S ribosomal subunit. It is not involved in the protein synthesizing functions of that subunit. The protein is Large ribosomal subunit protein bL20 of Burkholderia cenocepacia (strain HI2424).